We begin with the raw amino-acid sequence, 186 residues long: ATP synthase subunit delta (186 aa).

The protein belongs to the ATPase delta chain family. F-type ATPases have 2 components, F(1) - the catalytic core - and F(0) - the membrane proton channel. F(1) has five subunits: alpha(3), beta(3), gamma(1), delta(1), epsilon(1). F(0) has three main subunits: a(1), b(2) and c(10-14). The alpha and beta chains form an alternating ring which encloses part of the gamma chain. F(1) is attached to F(0) by a central stalk formed by the gamma and epsilon chains, while a peripheral stalk is formed by the delta and b chains.

It localises to the cell inner membrane. Its function is as follows. F(1)F(0) ATP synthase produces ATP from ADP in the presence of a proton or sodium gradient. F-type ATPases consist of two structural domains, F(1) containing the extramembraneous catalytic core and F(0) containing the membrane proton channel, linked together by a central stalk and a peripheral stalk. During catalysis, ATP synthesis in the catalytic domain of F(1) is coupled via a rotary mechanism of the central stalk subunits to proton translocation. This protein is part of the stalk that links CF(0) to CF(1). It either transmits conformational changes from CF(0) to CF(1) or is implicated in proton conduction. This chain is ATP synthase subunit delta, found in Bacteroides fragilis (strain ATCC 25285 / DSM 2151 / CCUG 4856 / JCM 11019 / LMG 10263 / NCTC 9343 / Onslow / VPI 2553 / EN-2).